A 710-amino-acid polypeptide reads, in one-letter code: Solute carrier organic anion transporter family member 3A1 (710 aa).

The residue at position 1 (Met1) is an N-acetylmethionine. The segment covering 1 to 15 (MQGKKPGGSSGGGRS) has biased composition (gly residues). Positions 1-25 (MQGKKPGGSSGGGRSGELQGDEAQR) are disordered. Residues 1–40 (MQGKKPGGSSGGGRSGELQGDEAQRNKKKKKKVSCFSNIK) lie on the Cytoplasmic side of the membrane. A helical transmembrane segment spans residues 41–60 (IFLVSECALMLAQGTVGAYL). Over 61–79 (VSVLTTLERRFNLQSADVG) the chain is Extracellular. The chain crosses the membrane as a helical span at residues 80-100 (VIASSFEIGNLALILFVSYFG). The Cytoplasmic portion of the chain corresponds to 101 to 106 (ARGHRP). Residues 107-131 (RLIGCGGIVMALGALLSALPEFLTH) form a helical membrane-spanning segment. At 132–174 (QYKYEAGEIRWGAEGRDVCATNGSSSDEGPDPDLICRNRTATN) the chain is on the extracellular side. Asn153 and Asn169 each carry an N-linked (GlcNAc...) asparagine glycan. The helical transmembrane segment at 175 to 203 (MMYLLLIGAQVLLGIGATPVQPLGVSYID) threads the bilayer. Topologically, residues 204-222 (DHVRRKDSSLYIGILFTML) are cytoplasmic. A helical transmembrane segment spans residues 223–243 (VFGPACGFILGSFCTKIYVDA). The Extracellular portion of the chain corresponds to 244-261 (VFIDTSNLDITPDDPRWI). Residues 262–286 (GAWWGGFLLCGALLFFSSLLMFGFP) traverse the membrane as a helical segment. The Cytoplasmic segment spans residues 287–344 (QSLPPHSDPGMESEQAMLPEREYERPKPSNGVLRHPLEPDSSASCFQQLRVIPKVTKH). Residues 345 to 366 (LLSNPVFTCIVLAACMEIAVVA) form a helical membrane-spanning segment. Topologically, residues 367–386 (GFAAFLGKYLEQQFNLTTSS) are extracellular. Residue Asn381 is glycosylated (N-linked (GlcNAc...) asparagine). Residues 387–410 (ANQLLGMTAIPCACLGIFLGGLLV) traverse the membrane as a helical segment. Residues 411–414 (KKLS) are Cytoplasmic-facing. The chain crosses the membrane as a helical span at residues 415–438 (LSALGAIRMAMLVNLVSTACYVSF). At 439–539 (LFLGCDTGPV…PGCQEAFLTF (101 aa)) the chain is on the extracellular side. The N-linked (GlcNAc...) asparagine glycan is linked to Asn457. In terms of domain architecture, Kazal-like spans 465 to 513 (LDPYSPCNNNCECQTDSFTPVCGADGITYLSACFAGCNSTNLTGCACLT). Intrachain disulfides connect Cys471-Cys497, Cys475-Cys486, and Cys477-Cys501. Asn502, Asn505, and Asn519 each carry an N-linked (GlcNAc...) asparagine glycan. The helical transmembrane segment at 540-562 (LCVMCVCSLIGAMAQTPSVIILI) threads the bilayer. The Cytoplasmic portion of the chain corresponds to 563 to 571 (RTVSPELKS). A helical transmembrane segment spans residues 572–597 (YALGVLFLLLRLLGFIPPPLIFGAGI). Residues 598–630 (DSTCLFWSTFCGEQGACVLYDNVVYRYLYVSIA) are Extracellular-facing. Residues 631–648 (IALKSFAFILYTTTWQCL) traverse the membrane as a helical segment. Over 649 to 705 (RKNYKRYIKNHEGGLSTSEFFASTLTLDNLGRDPVPAHQTHRTKFIYNLEDHEWCEN) the chain is Cytoplasmic.

It belongs to the organo anion transporter (TC 2.A.60) family. In terms of tissue distribution, widely expressed.

It is found in the basolateral cell membrane. The protein localises to the apical cell membrane. It localises to the basal cell membrane. It carries out the reaction L-thyroxine(out) = L-thyroxine(in). The catalysed reaction is prostaglandin E1(out) = prostaglandin E1(in). It catalyses the reaction prostaglandin E2(out) = prostaglandin E2(in). The enzyme catalyses prostaglandin F2alpha(out) = prostaglandin F2alpha(in). It carries out the reaction (5Z,8Z,11Z,14Z)-eicosatetraenoate(out) = (5Z,8Z,11Z,14Z)-eicosatetraenoate(in). The catalysed reaction is taurocholate(out) = taurocholate(in). It catalyses the reaction glycocholate(out) = glycocholate(in). The enzyme catalyses estrone 3-sulfate(out) = estrone 3-sulfate(in). It carries out the reaction argipressin(out) = argipressin(in). Functionally, putative organic anion antiporter with apparent broad substrate specificity. Recognizes various substrates including thyroid hormone L-thyroxine, prostanoids such as prostaglandin E1 and E2, bile acids such as taurocholate, glycolate and glycochenodeoxycholate and peptide hormones such as L-arginine vasopressin, likely operating in a tissue-specific manner. The transport mechanism, its electrogenicity and potential tissue-specific counterions remain to be elucidated. The chain is Solute carrier organic anion transporter family member 3A1 (Slco3a1) from Mus musculus (Mouse).